The following is a 31-amino-acid chain: MFTVVSYLGILAAFALVTIGIFLVLRTIQLI.

The helical transmembrane segment at 4-24 threads the bilayer; the sequence is VVSYLGILAAFALVTIGIFLV.

Belongs to the PetL family. In terms of assembly, the 4 large subunits of the cytochrome b6-f complex are cytochrome b6, subunit IV (17 kDa polypeptide, PetD), cytochrome f and the Rieske protein, while the 4 small subunits are PetG, PetL, PetM and PetN. The complex functions as a dimer.

The protein resides in the plastid. The protein localises to the chloroplast thylakoid membrane. Component of the cytochrome b6-f complex, which mediates electron transfer between photosystem II (PSII) and photosystem I (PSI), cyclic electron flow around PSI, and state transitions. PetL is important for photoautotrophic growth as well as for electron transfer efficiency and stability of the cytochrome b6-f complex. The chain is Cytochrome b6-f complex subunit 6 from Mesostigma viride (Green alga).